Reading from the N-terminus, the 362-residue chain is MTDAGKRILVMAGGTGGHVFPALAVAKYLAQQGWQVRWLGTADRMEARLVPQYGFDIDFIDIKGVRGNGLVRKLAAPFKVVRSILQAKAVIAEFKPDVVLGMGGFASGPGGVAAKLAGVPLVLHEQNAIPGMTNKLLSRIASQVLCAFKNTFTQVKAKVVGNPIRRELIALGGEPKQTADEALKVLVVGGSLGAKVFNDLMPEVVAALSKQQSITVWHQVGKDNLAGVKSAYQQQGQDGGVNVAEFIDDMEAAYRWADVVLCRAGALTVSELAAVGLPSILVPYPHAVDDHQTRNAQVLVEAGAAFLLPQAILDVNKLVSKLQLLANDRAELARMGQRARDVAVLDATEQVAQVCIALAEKG.

UDP-N-acetyl-alpha-D-glucosamine is bound by residues 15 to 17 (TGG), Asn127, Arg165, Ser191, Ile247, 266 to 271 (ALTVSE), and Gln292.

This sequence belongs to the glycosyltransferase 28 family. MurG subfamily.

The protein resides in the cell inner membrane. The catalysed reaction is di-trans,octa-cis-undecaprenyl diphospho-N-acetyl-alpha-D-muramoyl-L-alanyl-D-glutamyl-meso-2,6-diaminopimeloyl-D-alanyl-D-alanine + UDP-N-acetyl-alpha-D-glucosamine = di-trans,octa-cis-undecaprenyl diphospho-[N-acetyl-alpha-D-glucosaminyl-(1-&gt;4)]-N-acetyl-alpha-D-muramoyl-L-alanyl-D-glutamyl-meso-2,6-diaminopimeloyl-D-alanyl-D-alanine + UDP + H(+). It participates in cell wall biogenesis; peptidoglycan biosynthesis. In terms of biological role, cell wall formation. Catalyzes the transfer of a GlcNAc subunit on undecaprenyl-pyrophosphoryl-MurNAc-pentapeptide (lipid intermediate I) to form undecaprenyl-pyrophosphoryl-MurNAc-(pentapeptide)GlcNAc (lipid intermediate II). This is UDP-N-acetylglucosamine--N-acetylmuramyl-(pentapeptide) pyrophosphoryl-undecaprenol N-acetylglucosamine transferase from Shewanella oneidensis (strain ATCC 700550 / JCM 31522 / CIP 106686 / LMG 19005 / NCIMB 14063 / MR-1).